We begin with the raw amino-acid sequence, 240 residues long: Lipoprotein-releasing system ATP-binding protein LolD (240 aa).

One can recognise an ABC transporter domain in the interval Ile-15–Val-240. Gly-51–Ser-58 contacts ATP.

It belongs to the ABC transporter superfamily. Lipoprotein translocase (TC 3.A.1.125) family. In terms of assembly, the complex is composed of two ATP-binding proteins (LolD) and two transmembrane proteins (LolC and LolE).

Its subcellular location is the cell inner membrane. Its function is as follows. Part of the ABC transporter complex LolCDE involved in the translocation of mature outer membrane-directed lipoproteins, from the inner membrane to the periplasmic chaperone, LolA. Responsible for the formation of the LolA-lipoprotein complex in an ATP-dependent manner. This Xylella fastidiosa (strain Temecula1 / ATCC 700964) protein is Lipoprotein-releasing system ATP-binding protein LolD.